Here is a 281-residue protein sequence, read N- to C-terminus: 2,3,4,5-tetrahydropyridine-2,6-dicarboxylate N-succinyltransferase (281 aa).

Belongs to the transferase hexapeptide repeat family.

It localises to the cytoplasm. It catalyses the reaction (S)-2,3,4,5-tetrahydrodipicolinate + succinyl-CoA + H2O = (S)-2-succinylamino-6-oxoheptanedioate + CoA. Its pathway is amino-acid biosynthesis; L-lysine biosynthesis via DAP pathway; LL-2,6-diaminopimelate from (S)-tetrahydrodipicolinate (succinylase route): step 1/3. The chain is 2,3,4,5-tetrahydropyridine-2,6-dicarboxylate N-succinyltransferase from Afipia carboxidovorans (strain ATCC 49405 / DSM 1227 / KCTC 32145 / OM5) (Oligotropha carboxidovorans).